Here is a 119-residue protein sequence, read N- to C-terminus: Large ribosomal subunit protein bL20 (119 aa).

This sequence belongs to the bacterial ribosomal protein bL20 family.

Its function is as follows. Binds directly to 23S ribosomal RNA and is necessary for the in vitro assembly process of the 50S ribosomal subunit. It is not involved in the protein synthesizing functions of that subunit. The chain is Large ribosomal subunit protein bL20 from Caldicellulosiruptor bescii (strain ATCC BAA-1888 / DSM 6725 / KCTC 15123 / Z-1320) (Anaerocellum thermophilum).